The sequence spans 176 residues: Urease accessory protein UreE (176 aa).

A disordered region spans residues 134-176 (EAGAYGSGGHHHHGESSQGHAHGPLAPIPVHQKIHRPSDIPSR).

Belongs to the UreE family.

The protein localises to the cytoplasm. Functionally, involved in urease metallocenter assembly. Binds nickel. Probably functions as a nickel donor during metallocenter assembly. This is Urease accessory protein UreE from Nitrosospira multiformis (strain ATCC 25196 / NCIMB 11849 / C 71).